Reading from the N-terminus, the 391-residue chain is Processive diacylglycerol beta-glucosyltransferase (391 aa).

It belongs to the glycosyltransferase 28 family. UgtP subfamily.

Its subcellular location is the cell membrane. The catalysed reaction is a 1,2-diacyl-3-O-(beta-D-glucopyranosyl)-sn-glycerol + UDP-alpha-D-glucose = a 1,2-diacyl-3-O-(beta-D-Glc-(1-&gt;6)-beta-D-Glc)-sn-glycerol + UDP + H(+). It catalyses the reaction a 1,2-diacyl-sn-glycerol + UDP-alpha-D-glucose = a 1,2-diacyl-3-O-(beta-D-glucopyranosyl)-sn-glycerol + UDP + H(+). Its pathway is glycolipid metabolism; diglucosyl-diacylglycerol biosynthesis. Processive glucosyltransferase involved in the biosynthesis of both the bilayer- and non-bilayer-forming membrane glucolipids. Is able to successively transfer two glucosyl residues to diacylglycerol (DAG), thereby catalyzing the formation of beta-monoglucosyl-DAG (3-O-(beta-D-glucopyranosyl)-1,2-diacyl-sn-glycerol) and beta-diglucosyl-DAG (3-O-(beta-D-glucopyranosyl-beta-(1-&gt;6)-D-glucopyranosyl)-1,2-diacyl-sn-glycerol). Beta-diglucosyl-DAG is the predominant glycolipid found in Bacillales and is also used as a membrane anchor for lipoteichoic acid (LTA). This Staphylococcus epidermidis (strain ATCC 12228 / FDA PCI 1200) protein is Processive diacylglycerol beta-glucosyltransferase.